The chain runs to 2170 residues: MEEILRKLQRDASGSKYKAIKESCTWALETLGGLDTVVKIPPHLLREKCLLPLQLALESKNVKLAQHALAGMQKLLSEERFVSMETDSDEKQLLNQILNAVKVTPSLNEDLQVEVMKVLLCITYTPTFDMNGSAVLKIAEVCIETYTCSCHQRSINTAVRATLSQMLGDLTLQLRQRQENTIIENPDAPQEFRSQGLTVEALCDDVISVLAVLCEKLQASINDSQQLQLLYLECILSVLSSSSSSMHLHRGFTDLIWKSLCPALVVILGNPIHDKTITSAHSTSTSTSMESDSASLGVSDHGRGSGCSCTAPTLSGPVARTIYYLAAELVRLVGSVDSMKPVLQSLYHRVLLYPPPQHRVEAIKIMKEILGSPQRLYDLAGPSSIESEPRKRSISKRKSHLDLLKLIMDGMTEACIKGGIEACYAAVSCVCTLLGALDELSQGKGLNDTQVQQLLLRLEELRDGAESSRDSMEINEADFRWQRRVLSSEHTPWESGNERSPDISISVTTDTGQTTLEGELGQTTPEDHKNGLKSPAIQEGKGTMGKVSEPEAIDQPDVVQRSHTVPYPDITNFLSVDCRTRSYGSRYSESNFSVDDQDLSRTEFDSCDQYSMAAEKDSGRSDVSDIGSDNCSLADEEQTPRDYIGHRSLRTAALSLKLLKNQEADQHSARLFIQSLEGLLPRLLALSSVEEVDSALQNFASTFCSGMMHSPGFDGGSSLSFQMLMNADSLYTAAHCALLLNLKLSHGDYYRKRPTVAPGMMKEFMKQVQTSGVLMVFSQAWLEELYHQVLDRNMLGEAGYWGSPEDNSLPLITMLTDIDGLESSAIGGQLMASASVESPFTQSRRLDDSTVAGVAFARYILVGCWKNLIDTLSTPLTGRMAGSSKGLAFILGAEGIKEQNQKERDAICMSLDGLRKAARLSCALGVAANCASALAQMAAASCVQEEKEERQSQEPSDALAQVKLKVEQKLEQMGKVQGVWLHTAHVLCMDAILSVGLEMGSHNPDCWPHVFRVCEYVGTLEHTHFSDGISQPPLTIHQPQKTSGSSGLLGEIEFKSSSQEQSLEQGPSLNTAPVVQPHSIQELVRECSRGRTSDFRGGSLSGNSAAKVVLSLSTQADRLFDDATDKLNLTALGGFLYQLKKASQSQLFHSVTDTVDYSLTMPGEVKSTQDQKSALHLFRLGDAMLRIVRSKARPLLHVMRCWSLVAPHLVEAACHKERHVSQKAVSFIHDILTEVLTDWSEPPHFHFNEALFRPFERIMQLELCDEDVQDQVVTSIGELVEVCSAQIQSGWRPLFSALETVRSGNKSEVKEYLVGDYSMGKGQAPVFDVFEAFLNTDNIQVFANAATSYIMCLMKFVKGLGEVDCKEIGDCVPGAGATSTDLCLPALDYLRRCSQLLAKIYKMPLKPIFLSGRLASLPRRLQEQSASSEDGIESVLSDFDDDTGLIEVWIILLEQLTAAVSNCPRQHQPPTLDLLFELLRDVTKTPGPGFGIYAVVHLLLPVMSLWLLRSHKDHSYWDVASANFKHAIGLSCELVVEHIQSFLHSDIRYESMINTMLKDLFELLVVCVAKPTETISRVGCSCIRYVLVTAGPVFTEEMWRLACCALQDAFSATLKPVKDLLGCFHGGTEGFSGEGCQVRVAAPSSSPSAEAEYWRIRAMAQQVFMLDTQCSPKTPNNFDHAQSCQLIIELPHDEKPNGHAKKSVSFREIVVSLLSHQVLLQNLYDILLEEFVKGPSPGEEKTVQVPDTKLAGFLRYISMQNLAVIFDLLLDSYRTAREFDTSPGLKCLLKKVSGIGGAANLYRQSAMSFNIYFHALVCAVLTNQETITAEQVKKVLFEEEERSSDSSQQCSSEDEDIFEETAQVSPPRGKEKRQWRARLPSLSVQPVSNADWVWLVKRLHKLCMELCNHYIQMHLDLESSLEEPLTFKSDPFFILPSFQSESSTPSTGGFSGKNTPSEDDRREHLSEPQSLRVGSGDMLMLPPSPKTEKKDPGRKKEWWESAGNKICTMAADKTISKLMTEYKKRRQPHNLPPFPKEVKVDKKGEPLGPRGPDSPLLQRPQHLIDQGQMRHSFSAGPELLRQEKRPRSGSTGSSLSVSVRDAEAQIQAWTNMVLTVLNQIQILPDQTFTALQPAVFPCISQLTCHVTDIRVRQAVREWLGRVGRVYDIIT.

At Ser471 the chain carries Phosphoserine. 2 disordered regions span residues 489-547 (EHTP…MGKV) and 613-634 (AAEKDSGRSDVSDIGSDNCSLA). Residues 503 to 524 (ISISVTTDTGQTTLEGELGQTT) are compositionally biased toward polar residues. The 214-residue stretch at 579–792 (RTRSYGSRYS…EELYHQVLDR (214 aa)) folds into the SEC7 domain. A compositionally biased stretch (basic and acidic residues) spans 614–623 (AEKDSGRSDV). Phosphoserine occurs at positions 628, 632, and 1045. The chain crosses the membrane as a helical span at residues 1488–1508 (PGFGIYAVVHLLLPVMSLWLL). Positions 1843–1872 (SSDSSQQCSSEDEDIFEETAQVSPPRGKEK) are disordered. Residue Ser1881 is modified to Phosphoserine. Polar residues predominate over residues 1938–1955 (FQSESSTPSTGGFSGKNT). Disordered regions lie at residues 1938–1997 (FQSE…RKKE) and 2024–2058 (KRRQPHNLPPFPKEVKVDKKGEPLGPRGPDSPLLQ). Basic and acidic residues predominate over residues 1956-1966 (PSEDDRREHLS). Residues Ser1975 and Ser1984 each carry the phosphoserine modification. 2 stretches are compositionally biased toward basic and acidic residues: residues 1986 to 1997 (KTEKKDPGRKKE) and 2036 to 2045 (KEVKVDKKGE). Ser2072, Ser2074, Ser2088, Ser2094, and Ser2096 each carry phosphoserine. The interval 2078–2097 (ELLRQEKRPRSGSTGSSLSV) is disordered. Residues 2088-2097 (SGSTGSSLSV) show a composition bias toward low complexity.

Interacts with PHB2. Expressed in pancreatic islet (insulin granules of islet alpha and beta cells) and brain (at protein level).

It localises to the cytoplasmic vesicle. It is found in the secretory vesicle. The protein localises to the secretory vesicle membrane. Its function is as follows. Participates in the regulation of systemic glucose homeostasis, where it negatively regulates insulin granule biogenesis in pancreatic islet beta cells. Also regulates glucagon granule production in pancreatic alpha cells. Inhibits nuclear translocation of the transcriptional coregulator PHB2 and may enhance estrogen receptor alpha (ESR1) transcriptional activity in breast cancer cells. The polypeptide is Brefeldin A-inhibited guanine nucleotide-exchange protein 3 (Mus musculus (Mouse)).